The chain runs to 108 residues: Replication restart protein PriB (108 aa).

The region spanning 8–108 (IDNRFSVMGV…LHAEQIEFID (101 aa)) is the SSB domain.

The protein belongs to the PriB family. In terms of assembly, homodimer. Interacts with PriA and DnaT. Component of the replication restart primosome. Primosome assembly occurs via a 'hand-off' mechanism. PriA binds to replication forks, subsequently PriB then DnaT bind; DnaT then displaces ssDNA to generate the helicase loading substrate.

Involved in the restart of stalled replication forks, which reloads the replicative helicase on sites other than the origin of replication; the PriA-PriB pathway is the major replication restart pathway. During primosome assembly it facilitates complex formation between PriA and DnaT on DNA; stabilizes PriA on DNA. Stimulates the DNA unwinding activity of PriA helicase. The polypeptide is Replication restart protein PriB (Haemophilus influenzae (strain 86-028NP)).